Consider the following 176-residue polypeptide: Ribosome maturation factor RimM (176 aa).

The PRC barrel domain maps to 93–172; it reads KDEFFQFDII…EILVKGARDI (80 aa).

The protein belongs to the RimM family. Binds ribosomal protein uS19.

It localises to the cytoplasm. In terms of biological role, an accessory protein needed during the final step in the assembly of 30S ribosomal subunit, possibly for assembly of the head region. Essential for efficient processing of 16S rRNA. May be needed both before and after RbfA during the maturation of 16S rRNA. It has affinity for free ribosomal 30S subunits but not for 70S ribosomes. The polypeptide is Ribosome maturation factor RimM (Campylobacter concisus (strain 13826)).